Consider the following 203-residue polypeptide: Guanylate kinase (203 aa).

A Guanylate kinase-like domain is found at 5-183 (GVLYIISAPS…AVEELKSVVV (179 aa)). 12-19 (APSGAGKT) contributes to the ATP binding site.

The protein belongs to the guanylate kinase family.

The protein localises to the cytoplasm. It catalyses the reaction GMP + ATP = GDP + ADP. In terms of biological role, essential for recycling GMP and indirectly, cGMP. The chain is Guanylate kinase from Geobacter metallireducens (strain ATCC 53774 / DSM 7210 / GS-15).